A 238-amino-acid polypeptide reads, in one-letter code: MALTTPLSITAIVPAAGVGSRMKADRPKQYLLLNGKTVLEHTIEQLLAFPLVNKVVVAITDGDPYFPELTLAQDNRVIRVSGGKERADSVLSGLSYVQEHQLSEWVMVHDAARPCVRHSDIDKLITEVIPEHIGGILASPVRDTMKQATQEQCIETTIDRSVLWHALTPQLFTTELLYSALQTGLDKNLSITDESSAIELMGYQPKLVQGRADNLKITQPEDLDLAEFYLQKMKKETK.

It belongs to the IspD/TarI cytidylyltransferase family. IspD subfamily.

The catalysed reaction is 2-C-methyl-D-erythritol 4-phosphate + CTP + H(+) = 4-CDP-2-C-methyl-D-erythritol + diphosphate. Its pathway is isoprenoid biosynthesis; isopentenyl diphosphate biosynthesis via DXP pathway; isopentenyl diphosphate from 1-deoxy-D-xylulose 5-phosphate: step 2/6. Functionally, catalyzes the formation of 4-diphosphocytidyl-2-C-methyl-D-erythritol from CTP and 2-C-methyl-D-erythritol 4-phosphate (MEP). This is 2-C-methyl-D-erythritol 4-phosphate cytidylyltransferase from Aliivibrio fischeri (strain MJ11) (Vibrio fischeri).